A 141-amino-acid polypeptide reads, in one-letter code: Putative pre-16S rRNA nuclease (141 aa).

This sequence belongs to the YqgF nuclease family.

It is found in the cytoplasm. Its function is as follows. Could be a nuclease involved in processing of the 5'-end of pre-16S rRNA. The protein is Putative pre-16S rRNA nuclease of Desulforudis audaxviator (strain MP104C).